Here is a 990-residue protein sequence, read N- to C-terminus: Sister chromatid cohesion protein PDS5 homolog E (990 aa).

HEAT repeat units lie at residues 31-57 (DATL…SVQK), 58-96 (ALHP…ITAP), 153-190 (DLVL…DESE), 191-228 (EVPM…SCTC), and 232-269 (PCIM…HNDV). The tract at residues 262-565 (TTQAHNDVKP…AGEEVESNTN (304 aa)) is disordered. The span at 267 to 281 (NDVKPKDNEADEKIS) shows a compositional bias: basic and acidic residues. Positions 302-314 (KGTRSKRSARGGT) are enriched in basic residues. 2 stretches are compositionally biased toward polar residues: residues 328–342 (EGLS…ASGS) and 394–410 (VGQT…SSGR). 3 stretches are compositionally biased toward basic and acidic residues: residues 421 to 430 (TKMEETDHDV), 448 to 477 (PAKE…EKAD), and 503 to 512 (VHSDAKKKNS). Positions 458–465 (VKKHEDGI) match the Nuclear localization signal 1 motif. 2 consecutive short sequence motifs (nuclear localization signal) follow at residues 539 to 546 (TKKSEQAP) and 583 to 590 (DKKFYEGV). Residues 653–966 (KKRKIVSKNV…VGNEAEEDDQ (314 aa)) form a disordered region. Residues 662 to 673 (VEPSSSPEVRSS) are compositionally biased toward low complexity. Short sequence motifs (nuclear localization signal) lie at residues 677–684 (MKKKDSVT) and 715–722 (LKKLNGEP). The segment covering 727–742 (GRTGKKQKVTQAMHRK) has biased composition (basic residues). Positions 746–760 (DCDEQEDLETKDEED) are enriched in acidic residues. Basic and acidic residues-rich tracts occupy residues 761-810 (SLKL…KTNG), 819-890 (TDGK…KETN), and 898-947 (EEQK…DKET).

The protein belongs to the PDS5 family. In terms of assembly, interacts with the cohesin complex.

It localises to the nucleus. In terms of biological role, cohesin cofactor dispensable during the meiotic division but playing an important role in DNA repair by homologous recombination (HR) probably by helping SMC5/SMC6 complex. Regulator of sister chromatid cohesion in mitosis which may stabilize cohesin complex association with chromatin. May couple sister chromatid cohesion during mitosis to DNA replication. Cohesion ensures that chromosome partitioning is accurate in both meiotic and mitotic cells and plays an important role in DNA repair. The polypeptide is Sister chromatid cohesion protein PDS5 homolog E (Arabidopsis thaliana (Mouse-ear cress)).